The following is a 476-amino-acid chain: Proline--tRNA ligase (476 aa).

It belongs to the class-II aminoacyl-tRNA synthetase family. ProS type 3 subfamily. In terms of assembly, homodimer.

It is found in the cytoplasm. The catalysed reaction is tRNA(Pro) + L-proline + ATP = L-prolyl-tRNA(Pro) + AMP + diphosphate. In terms of biological role, catalyzes the attachment of proline to tRNA(Pro) in a two-step reaction: proline is first activated by ATP to form Pro-AMP and then transferred to the acceptor end of tRNA(Pro). The sequence is that of Proline--tRNA ligase from Rubrobacter xylanophilus (strain DSM 9941 / JCM 11954 / NBRC 16129 / PRD-1).